A 317-amino-acid chain; its full sequence is Tenomodulin (317 aa).

Residues 1 to 30 (MAKNPPENCEGCHILNAEALKSKKICKSLK) lie on the Cytoplasmic side of the membrane. Residues 31 to 50 (ICGLVFGILALTLIVLFWGS) form a helical; Signal-anchor for type II membrane protein membrane-spanning segment. Residues 51 to 317 (KHFWPEVSKK…WWVARMLGRV (267 aa)) lie on the Extracellular side of the membrane. The BRICHOS domain occupies 93–186 (GNGTDETLEV…ICDNVTMYWI (94 aa)). N94 is a glycosylation site (N-linked (GlcNAc...) asparagine). A disulfide bond links C120 and C178. A glycan (N-linked (GlcNAc...) asparagine) is linked at N180. S239 carries the phosphoserine modification.

The protein belongs to the chondromodulin-1 family. In terms of tissue distribution, widely expressed with highest expression in tendons and ligaments, in the diaphragm, eye and skeletal muscle. Expressed in neuronal cells of all brain regions. Very low expression, if any, in glial cells.

Its subcellular location is the membrane. It localises to the nucleus envelope. In terms of biological role, may be an angiogenesis inhibitor. The protein is Tenomodulin (Tnmd) of Mus musculus (Mouse).